Here is a 397-residue protein sequence, read N- to C-terminus: G2/mitotic-specific cyclin-B1 (397 aa).

This sequence belongs to the cyclin family. Cyclin AB subfamily. In terms of assembly, interacts with the cdc2 protein kinase to form a serine/threonine kinase holoenzyme complex also known as maturation promoting factor (MPF). The cyclin subunit imparts substrate specificity to the complex. When not in a complex with cdc2, interacts with spdya. Interacts with nap1l1. Interacts with nanos1.

Its subcellular location is the cytoplasm. It localises to the cytoskeleton. It is found in the microtubule organizing center. The protein localises to the centrosome. The protein resides in the nucleus. Essential for the control of the cell cycle at the G2/M (mitosis) transition. The protein is G2/mitotic-specific cyclin-B1 (ccnb1) of Xenopus laevis (African clawed frog).